Consider the following 1117-residue polypeptide: Guanylate cyclase D (1117 aa).

Residues 1 to 66 (MAGLQQGCHF…ADSLSLLAWA (66 aa)) form the signal peptide. At 67–479 (RETFTLGVLG…CIRGVQPLGS (413 aa)) the chain is on the extracellular side. C121 and C149 are oxidised to a cystine. A helical membrane pass occupies residues 480–500 (LLTLTIACVLALVGGFLAYFI). Residues 501–1117 (RLGLQQLRLL…RKSGEAGPGP (617 aa)) are Cytoplasmic-facing. The interval 529 to 557 (TPSRRRPHVDSGSESRSVVDGGSPRSVTQ) is disordered. Residues 541-812 (SESRSVVDGG…PSLDQIYTQF (272 aa)) form the Protein kinase domain. The interval 874-915 (MGTTVEPEYFDQVTIYFSDIVGFTTISALSEPIEVVGFLNDL) is interaction with NCALD. One can recognise a Guanylate cyclase domain in the interval 887–1017 (TIYFSDIVGF…DTVNTASRME (131 aa)). The disordered stretch occupies residues 1096 to 1117 (GFAKARQGLAEPRKSGEAGPGP).

Belongs to the adenylyl cyclase class-4/guanylyl cyclase family. Interacts (via the catalytic domain) with NCALD. In terms of tissue distribution, found in a subset of olfactory neurons in the main olfactory epithelium.

It localises to the cell projection. It is found in the cilium membrane. The catalysed reaction is GTP = 3',5'-cyclic GMP + diphosphate. Activated by Ca(2+). Functionally, functions as an olfactory receptor activated by urine odorants, uroguanylin and guanylin and as well by the volatile semiochemicals carbon disulfide (CS2) and carbon dioxide (CO2). Has guanylate cyclase activity upon binding of the ligand. Activation of GUCY2D neurons leads to the cGMP-dependent activation of the CNGA3 channels, membrane depolarization and an increase in action potential frequency. Signaling pathways activated by GUCY2D may trigger social behaviors such as acquisition of food preference. This Mus musculus (Mouse) protein is Guanylate cyclase D.